The following is a 643-amino-acid chain: Chromosomal replication initiator protein DnaA (643 aa).

A domain I, interacts with DnaA modulators region spans residues 1-97; sequence MADVPADLAA…VDDSAGEPPP (97 aa). A disordered region spans residues 87–303; sequence TVDDSAGEPP…ASGPGEPTAR (217 aa). The tract at residues 97–302 is domain II; the sequence is PAAPPAQQTP…PASGPGEPTA (206 aa). The span at 195–209 shows a compositional bias: polar residues; that stretch reads SPSSQDAYGSPSQDY. Basic and acidic residues predominate over residues 222 to 269; sequence QRGDYDTPRAEYEPARPDYDSARPDYESARPEYDQRDPVRRELPEPPA. Low complexity predominate over residues 291–300; that stretch reads PAPASGPGEP. Residues 303-519 are domain III, AAA+ region; the sequence is RLNPKYLFDT…GALIRVTAFA (217 aa). 4 residues coordinate ATP: G347, G349, K350, and T351. Positions 520–643 are domain IV, binds dsDNA; sequence SLNRQPVDLG…TELTNRIKNG (124 aa).

It belongs to the DnaA family. In terms of assembly, oligomerizes as a right-handed, spiral filament on DNA at oriC.

The protein localises to the cytoplasm. Functionally, plays an essential role in the initiation and regulation of chromosomal replication. ATP-DnaA binds to the origin of replication (oriC) to initiate formation of the DNA replication initiation complex once per cell cycle. Binds the DnaA box (a 9 base pair repeat at the origin) and separates the double-stranded (ds)DNA. Forms a right-handed helical filament on oriC DNA; dsDNA binds to the exterior of the filament while single-stranded (ss)DNA is stabiized in the filament's interior. The ATP-DnaA-oriC complex binds and stabilizes one strand of the AT-rich DNA unwinding element (DUE), permitting loading of DNA polymerase. After initiation quickly degrades to an ADP-DnaA complex that is not apt for DNA replication. Binds acidic phospholipids. The sequence is that of Chromosomal replication initiator protein DnaA from Streptomyces reticuli.